Consider the following 469-residue polypeptide: Solute carrier family 52, riboflavin transporter, member 3 (469 aa).

At 1–6 (MALLTH) the chain is on the cytoplasmic side. Residues 7 to 27 (LLVCTFGMGSWVAINGLWVEL) form a helical membrane-spanning segment. Residues 28 to 43 (PLLVTELPEGWYLPSY) are Extracellular-facing. Residues 44-64 (LTMVIQLANIGPLLVTLLHHF) form a helical membrane-spanning segment. The Cytoplasmic segment spans residues 65–71 (QPSCLSE). A helical membrane pass occupies residues 72-92 (VPIIFTVLAVGTVACALFAFL). At 93 to 105 (WNVTSWVLDGRHS) the chain is on the extracellular side. N94 is a glycosylation site (N-linked (GlcNAc...) asparagine). A helical transmembrane segment spans residues 106 to 126 (IAFMVLTFFLALVDCTSSVTF). The Cytoplasmic segment spans residues 127–137 (LPFMSRLPACY). A helical membrane pass occupies residues 138–158 (LTTFFVGEGLSSLLPALVALA). The Extracellular portion of the chain corresponds to 159-220 (QGSGLTTCVN…SRYLPANFSP (62 aa)). The N-linked (GlcNAc...) asparagine glycan is linked to N168. The helical transmembrane segment at 221-241 (LVFFLLLSFMMACCLAAFFLL) threads the bilayer. The Cytoplasmic portion of the chain corresponds to 242-297 (QRQPRPRESSIEDLLTSQVTLHSIRPREGDDLGPPDPGPSSKAQGLPEEKTASDHP). S251 bears the Phosphoserine mark. The tract at residues 266-290 (RPREGDDLGPPDPGPSSKAQGLPEE) is disordered. Residues 298–318 (AHLAFIYVLVAFVNALTNGVL) form a helical membrane-spanning segment. The Extracellular portion of the chain corresponds to 319-335 (PSVQTYSCLSYGPVAYH). Residues 336–356 (LSATLSSMANPLACFLSMFLP) traverse the membrane as a helical segment. Topologically, residues 357–361 (HRSLP) are cytoplasmic. A helical membrane pass occupies residues 362–382 (FLGVLTVLGTGFGAYNMAMAV). Residues 383 to 396 (MSPCPLMQGHWAGE) lie on the Extracellular side of the membrane. A helical membrane pass occupies residues 397–417 (ILIVASWVLFIGCLSYVKVML). The Cytoplasmic portion of the chain corresponds to 418–427 (GVILRDRSRS). A helical transmembrane segment spans residues 428–448 (ALVWCGAAVQLGSLLGALLMF). At 449 to 469 (PLVNVLRLFSSADFCSLQCSA) the chain is on the extracellular side.

The protein belongs to the riboflavin transporter family.

The protein localises to the cell membrane. The catalysed reaction is riboflavin(in) = riboflavin(out). Functionally, plasma membrane transporter mediating the uptake by cells of the water soluble vitamin B2/riboflavin that plays a key role in biochemical oxidation-reduction reactions of the carbohydrate, lipid, and amino acid metabolism. The protein is Solute carrier family 52, riboflavin transporter, member 3 (SLC52A3) of Ailuropoda melanoleuca (Giant panda).